Reading from the N-terminus, the 673-residue chain is MPFWWGRRNKFWYGRNYRRKKRRFPKRRKRRFYRRTKYRRPARRRRRRRRKVRRKKKTLIVRQWQPDSIVLCKIKGYDSIIWGAEGTQFQCSTHEMYEYTRQKYPGGGGFGVQLYSLEYLYDQWKLRNNIWTKTNQLKDLCRYLKCVMTFYRHQHIDFVIVYERQPPFEIDKLTYMKYHPYMLLQRKHKIILPSQTTNPRGKLKKKKTIKPPKQMLSKWFFQQQFAKYDLLLIAAAACSLRYPRIGCCNENRMITLYCLNTKFYQDTEWGTTKQAPHYFKPYATINKSMIFVSNYGGKKTEYNIGQWIETDIPGEGNLARYYRSISKEGGYFSPKILQAYQTKVKSVDYKPLPIVLGRYNPAIDDGKGNKIYLQTIMNGHWGLPQKTPDYIIEEVPLWLGFWGYYNYLKQTRTEAIFPLHMFVVQSKYIQTQQTETPNNFWAFIDNSFIQGKNPWDSVITYSEQKLWFPTVAWQLKTINAICESGPYVPKLDNQTYSTWELATHYSFHFKWGGPQISDQPVEDPGNKNKYDVPDTIKEALQIVNPAKNIAATMFHDWDYRRGCITSTAIKRMQQNLPTDSSLESDSDSEPAPKKKRLLPVLHDPQKKTEKINQCLLSLCEESTCQEQETEENILKLIQQQQQQQQKLKHNLLVLIKDLKVKQRLLQLQTGVLE.

Positions 575–595 (NLPTDSSLESDSDSEPAPKKK) are disordered.

It belongs to the anelloviridae capsid protein family.

The protein localises to the virion. Functionally, self-assembles to form an icosahedral capsid with a T=1 symmetry, about 30 nm in diameter, and consisting of 60 capsid proteins. The capsid encapsulates the genomic DNA. Capsid protein is involved in attachment and entry into the host cell. This is Capsid protein from Homo sapiens (Human).